A 485-amino-acid chain; its full sequence is Pumilio domain-containing protein 7 (485 aa).

The segment at 29-72 is disordered; the sequence is NKTHKNKNPKPPVKLLPYRHGSNTTSSDSDSYIFNSGSGSSDAE. A compositionally biased stretch (polar residues) spans 49-71; it reads GSNTTSSDSDSYIFNSGSGSSDA. 8 Pumilio repeats span residues 86-124, 128-163, 164-200, 201-236, 237-279, 287-324, 326-361, and 370-411; these read DVLL…AVFE, ESTT…ELLR, QMID…QLIQ, ELST…TFFV, HFLS…FRIQ, CIVR…TIID, CLLR…EMME, and DVES…RELP. An RNA-binding region spans residues 439 to 454; the sequence is FSSGKKIIDSVMRHGV.

Functionally, RNA-binding protein that binds to the consensus sequence 5'-CUCUGUAUCUUGU-3' in mRNA 3'-UTRs and modulates mRNA expression and stability. Functions redundantly with puf-5 and puf-6 in oocyte formation and organization, early embryonic cell divisions, and repression of expression of glp-1 and other maternal mRNAs in late oogenesis. This chain is Pumilio domain-containing protein 7, found in Caenorhabditis elegans.